Reading from the N-terminus, the 344-residue chain is Holliday junction branch migration complex subunit RuvB (344 aa).

The large ATPase domain (RuvB-L) stretch occupies residues 1–180 (MSRIVSGEAQ…FGIPVRLEFY (180 aa)). The ATP site is built by Leu19, Arg20, Gly61, Lys64, Thr65, Thr66, Arg170, Tyr180, and Arg217. Residue Thr65 coordinates Mg(2+). Residues 181–251 (THDELARVLL…AAAAALARLD (71 aa)) are small ATPAse domain (RuvB-S). The tract at residues 254–344 (EVGLDALDRR…AAPPADLFDK (91 aa)) is head domain (RuvB-H). DNA is bound by residues Arg290, Arg309, and Arg314.

Belongs to the RuvB family. As to quaternary structure, homohexamer. Forms an RuvA(8)-RuvB(12)-Holliday junction (HJ) complex. HJ DNA is sandwiched between 2 RuvA tetramers; dsDNA enters through RuvA and exits via RuvB. An RuvB hexamer assembles on each DNA strand where it exits the tetramer. Each RuvB hexamer is contacted by two RuvA subunits (via domain III) on 2 adjacent RuvB subunits; this complex drives branch migration. In the full resolvosome a probable DNA-RuvA(4)-RuvB(12)-RuvC(2) complex forms which resolves the HJ.

The protein localises to the cytoplasm. It carries out the reaction ATP + H2O = ADP + phosphate + H(+). In terms of biological role, the RuvA-RuvB-RuvC complex processes Holliday junction (HJ) DNA during genetic recombination and DNA repair, while the RuvA-RuvB complex plays an important role in the rescue of blocked DNA replication forks via replication fork reversal (RFR). RuvA specifically binds to HJ cruciform DNA, conferring on it an open structure. The RuvB hexamer acts as an ATP-dependent pump, pulling dsDNA into and through the RuvAB complex. RuvB forms 2 homohexamers on either side of HJ DNA bound by 1 or 2 RuvA tetramers; 4 subunits per hexamer contact DNA at a time. Coordinated motions by a converter formed by DNA-disengaged RuvB subunits stimulates ATP hydrolysis and nucleotide exchange. Immobilization of the converter enables RuvB to convert the ATP-contained energy into a lever motion, pulling 2 nucleotides of DNA out of the RuvA tetramer per ATP hydrolyzed, thus driving DNA branch migration. The RuvB motors rotate together with the DNA substrate, which together with the progressing nucleotide cycle form the mechanistic basis for DNA recombination by continuous HJ branch migration. Branch migration allows RuvC to scan DNA until it finds its consensus sequence, where it cleaves and resolves cruciform DNA. The sequence is that of Holliday junction branch migration complex subunit RuvB from Phenylobacterium zucineum (strain HLK1).